Consider the following 123-residue polypeptide: Large ribosomal subunit protein uL14 (123 aa).

The protein belongs to the universal ribosomal protein uL14 family. As to quaternary structure, part of the 50S ribosomal subunit. Forms a cluster with proteins L3 and L19. In the 70S ribosome, L14 and L19 interact and together make contacts with the 16S rRNA in bridges B5 and B8.

Its function is as follows. Binds to 23S rRNA. Forms part of two intersubunit bridges in the 70S ribosome. This Actinobacillus succinogenes (strain ATCC 55618 / DSM 22257 / CCUG 43843 / 130Z) protein is Large ribosomal subunit protein uL14.